The sequence spans 305 residues: Homoserine O-acetyltransferase (305 aa).

The Acyl-thioester intermediate role is filled by cysteine 142. 2 residues coordinate substrate: lysine 163 and serine 192. Histidine 235 (proton acceptor) is an active-site residue. Glutamate 237 is a catalytic residue. A substrate-binding site is contributed by arginine 249.

This sequence belongs to the MetA family.

It is found in the cytoplasm. It catalyses the reaction L-homoserine + acetyl-CoA = O-acetyl-L-homoserine + CoA. The protein operates within amino-acid biosynthesis; L-methionine biosynthesis via de novo pathway; O-acetyl-L-homoserine from L-homoserine: step 1/1. Its function is as follows. Transfers an acetyl group from acetyl-CoA to L-homoserine, forming acetyl-L-homoserine. This is Homoserine O-acetyltransferase from Hyphomonas neptunium (strain ATCC 15444).